The primary structure comprises 331 residues: Ornithine carbamoyltransferase (331 aa).

Carbamoyl phosphate-binding positions include 55–58 (STRT), glutamine 82, arginine 106, and 133–136 (HPTQ). L-ornithine contacts are provided by residues asparagine 166, aspartate 230, and 234–235 (SM). Carbamoyl phosphate-binding positions include 272–273 (CL) and arginine 317.

The protein belongs to the aspartate/ornithine carbamoyltransferase superfamily. OTCase family.

The protein resides in the cytoplasm. It carries out the reaction carbamoyl phosphate + L-ornithine = L-citrulline + phosphate + H(+). It functions in the pathway amino-acid biosynthesis; L-arginine biosynthesis; L-arginine from L-ornithine and carbamoyl phosphate: step 1/3. Reversibly catalyzes the transfer of the carbamoyl group from carbamoyl phosphate (CP) to the N(epsilon) atom of ornithine (ORN) to produce L-citrulline. The polypeptide is Ornithine carbamoyltransferase (argF) (Neisseria meningitidis serogroup B (strain ATCC BAA-335 / MC58)).